The sequence spans 85 residues: uncharacterized protein (85 aa).

An N-terminal signal peptide occupies residues 1–19 (MKTIFTVGAVVLATCLLSG). Residue Cys-20 is the site of N-palmitoyl cysteine attachment. Residue Cys-20 is the site of S-diacylglycerol cysteine attachment.

It is found in the cell outer membrane. This is an uncharacterized protein from Escherichia coli (strain K12).